The primary structure comprises 157 residues: Cyclic pyranopterin monophosphate synthase (157 aa).

Substrate-binding positions include 74 to 76 and 110 to 111; these read MCH and ME. Aspartate 125 is a catalytic residue.

This sequence belongs to the MoaC family. In terms of assembly, homohexamer; trimer of dimers.

The catalysed reaction is (8S)-3',8-cyclo-7,8-dihydroguanosine 5'-triphosphate = cyclic pyranopterin phosphate + diphosphate. Its pathway is cofactor biosynthesis; molybdopterin biosynthesis. Functionally, catalyzes the conversion of (8S)-3',8-cyclo-7,8-dihydroguanosine 5'-triphosphate to cyclic pyranopterin monophosphate (cPMP). This chain is Cyclic pyranopterin monophosphate synthase, found in Peptoclostridium acidaminophilum (Eubacterium acidaminophilum).